Here is a 282-residue protein sequence, read N- to C-terminus: MKKLLEGKTPANEIKENLIEEIKKLKSDGINPTLCVIEVGDDPASKIYLRVKRNLAKKVGIKEIGLHFPANTSQAELLEKIEDLNQDPSINGIMVQLPVPPQIDPRAIFETIAPEKDADGFSPLNLGRLWEGQSDVIPATVRSILTLIDYYGIEMAGKNTVIIGRSVIVGKPLAAVLVERDATVTIAHSKTKNLSELTKNADVIISDVGKAHLVTEDMVKEGAVIIDVGMNRENGKLMGDVDFDMVAPKAKAITPVPGGVGPLTVASLMKQAVILTRKQHGR.

NADP(+)-binding positions include 164-166 (GRS) and Ser189.

The protein belongs to the tetrahydrofolate dehydrogenase/cyclohydrolase family. Homodimer.

It catalyses the reaction (6R)-5,10-methylene-5,6,7,8-tetrahydrofolate + NADP(+) = (6R)-5,10-methenyltetrahydrofolate + NADPH. It carries out the reaction (6R)-5,10-methenyltetrahydrofolate + H2O = (6R)-10-formyltetrahydrofolate + H(+). The protein operates within one-carbon metabolism; tetrahydrofolate interconversion. Functionally, catalyzes the oxidation of 5,10-methylenetetrahydrofolate to 5,10-methenyltetrahydrofolate and then the hydrolysis of 5,10-methenyltetrahydrofolate to 10-formyltetrahydrofolate. This Lactobacillus johnsonii (strain CNCM I-12250 / La1 / NCC 533) protein is Bifunctional protein FolD 2.